Consider the following 193-residue polypeptide: dTTP/UTP pyrophosphatase (193 aa).

Asp77 serves as the catalytic Proton acceptor.

It belongs to the Maf family. YhdE subfamily. A divalent metal cation is required as a cofactor.

The protein resides in the cytoplasm. It catalyses the reaction dTTP + H2O = dTMP + diphosphate + H(+). The enzyme catalyses UTP + H2O = UMP + diphosphate + H(+). Its function is as follows. Nucleoside triphosphate pyrophosphatase that hydrolyzes dTTP and UTP. May have a dual role in cell division arrest and in preventing the incorporation of modified nucleotides into cellular nucleic acids. The protein is dTTP/UTP pyrophosphatase of Parabacteroides distasonis (strain ATCC 8503 / DSM 20701 / CIP 104284 / JCM 5825 / NCTC 11152).